The primary structure comprises 269 residues: Peptide deformylase 1A, chloroplastic/mitochondrial (269 aa).

Residues 1 to 60 (MGLHRDEATAMETLFRVSLRLLPVSAAVTCRSIRFPVSRPGSSHLLNRKLYNLPTSSSSS) constitute a chloroplast and mitochondrion transit peptide. Substrate contacts are provided by residues 123–126 (PGVG) and Gly187. Zn(2+) is bound at residue Cys188. A dimerization region spans residues 191–196 (VDGFRA). A Zn(2+)-binding site is contributed by His230. Glu231 is an active-site residue. Zn(2+) is bound at residue His234. Residues 236–254 (DGNLYVDKMVPRTFRTVDN) form a dimerization region.

This sequence belongs to the polypeptide deformylase family. Homodimer. Zn(2+) is required as a cofactor. As to expression, expressed in roots, leaves, flowers and siliques.

The protein resides in the plastid. It is found in the chloroplast stroma. It localises to the mitochondrion. It catalyses the reaction N-terminal N-formyl-L-methionyl-[peptide] + H2O = N-terminal L-methionyl-[peptide] + formate. Its activity is regulated as follows. Inhibited by actinonin. Removes the formyl group from the N-terminal Met of newly synthesized proteins. The protein is Peptide deformylase 1A, chloroplastic/mitochondrial (PDF1A) of Arabidopsis thaliana (Mouse-ear cress).